Here is a 370-residue protein sequence, read N- to C-terminus: Phospho-2-dehydro-3-deoxyheptonate aldolase, tyrosine-inhibited (370 aa).

Serine 2 carries the post-translational modification N-acetylserine.

The protein belongs to the class-I DAHP synthase family.

The catalysed reaction is D-erythrose 4-phosphate + phosphoenolpyruvate + H2O = 7-phospho-2-dehydro-3-deoxy-D-arabino-heptonate + phosphate. It participates in metabolic intermediate biosynthesis; chorismate biosynthesis; chorismate from D-erythrose 4-phosphate and phosphoenolpyruvate: step 1/7. Its activity is regulated as follows. Inhibited by tyrosine. In terms of biological role, stereospecific condensation of phosphoenolpyruvate (PEP) and D-erythrose-4-phosphate (E4P) giving rise to 3-deoxy-D-arabino-heptulosonate-7-phosphate (DAHP). This Saccharomyces cerevisiae (strain ATCC 204508 / S288c) (Baker's yeast) protein is Phospho-2-dehydro-3-deoxyheptonate aldolase, tyrosine-inhibited (ARO4).